The following is a 204-amino-acid chain: FMN-dependent NADH:quinone oxidoreductase (204 aa).

FMN-binding positions include S9 and 15 to 17; that span reads SAS.

It belongs to the azoreductase type 1 family. Homodimer. Requires FMN as cofactor.

It catalyses the reaction 2 a quinone + NADH + H(+) = 2 a 1,4-benzosemiquinone + NAD(+). It carries out the reaction N,N-dimethyl-1,4-phenylenediamine + anthranilate + 2 NAD(+) = 2-(4-dimethylaminophenyl)diazenylbenzoate + 2 NADH + 2 H(+). Its function is as follows. Quinone reductase that provides resistance to thiol-specific stress caused by electrophilic quinones. In terms of biological role, also exhibits azoreductase activity. Catalyzes the reductive cleavage of the azo bond in aromatic azo compounds to the corresponding amines. This Xanthomonas campestris pv. campestris (strain ATCC 33913 / DSM 3586 / NCPPB 528 / LMG 568 / P 25) protein is FMN-dependent NADH:quinone oxidoreductase.